Consider the following 273-residue polypeptide: 5-deoxy-glucuronate isomerase (273 aa).

The protein belongs to the isomerase IolB family.

The enzyme catalyses 5-deoxy-D-glucuronate = 5-dehydro-2-deoxy-D-gluconate. It functions in the pathway polyol metabolism; myo-inositol degradation into acetyl-CoA; acetyl-CoA from myo-inositol: step 4/7. Involved in the isomerization of 5-deoxy-glucuronate (5DG) to 5-dehydro-2-deoxy-D-gluconate (DKG or 2-deoxy-5-keto-D-gluconate). The chain is 5-deoxy-glucuronate isomerase from Listeria innocua serovar 6a (strain ATCC BAA-680 / CLIP 11262).